The following is a 151-amino-acid chain: RNA polymerase-binding transcription factor DksA (151 aa).

A coiled-coil region spans residues 34-54 (EAQLSHFKRILEAWRNQLRDE). The Zn(2+) site is built by cysteine 114, cysteine 117, cysteine 135, and cysteine 138. Residues 114–138 (CESCGVEIGIRRLEARPTADLCIDC) form a dksA C4-type zinc finger.

The protein belongs to the DksA family. As to quaternary structure, interacts directly with the RNA polymerase.

The protein localises to the cytoplasm. Its function is as follows. Transcription factor that acts by binding directly to the RNA polymerase (RNAP). Required for negative regulation of rRNA expression and positive regulation of several amino acid biosynthesis promoters. Also required for regulation of fis expression. The polypeptide is RNA polymerase-binding transcription factor DksA (Salmonella typhi).